The chain runs to 213 residues: Embryo-specific protein ATS3 (213 aa).

An N-terminal signal peptide occupies residues 1 to 21 (MTFPSLSVSFLFFAFIFVTHA). The PLAT domain occupies 34–148 (CPYTVVVMTS…LNTWYGHNNC (115 aa)). Residues 147-188 (NCNTTGRPSSPDLPPPHFPPEFPPETPTTPPPPPPRPSAASR) are disordered. Asn149 is a glycosylation site (N-linked (GlcNAc...) asparagine). The span at 157–183 (PDLPPPHFPPEFPPETPTTPPPPPPRP) shows a compositional bias: pro residues.

Expressed in seeds. Expression is restricted to the developing embryo.

It is found in the secreted. Its function is as follows. May play a role during embryo development. The polypeptide is Embryo-specific protein ATS3 (Arabidopsis thaliana (Mouse-ear cress)).